A 149-amino-acid chain; its full sequence is Large ribosomal subunit protein uL30 (149 aa).

The protein belongs to the universal ribosomal protein uL30 family. In terms of assembly, part of the 50S ribosomal subunit.

The protein is Large ribosomal subunit protein uL30 of Methanopyrus kandleri (strain AV19 / DSM 6324 / JCM 9639 / NBRC 100938).